Consider the following 293-residue polypeptide: Acetylglutamate kinase (293 aa).

Substrate is bound by residues 65-66 (GG), Arg-87, and Asn-180.

It belongs to the acetylglutamate kinase family. ArgB subfamily.

Its subcellular location is the cytoplasm. The enzyme catalyses N-acetyl-L-glutamate + ATP = N-acetyl-L-glutamyl 5-phosphate + ADP. The protein operates within amino-acid biosynthesis; L-arginine biosynthesis; N(2)-acetyl-L-ornithine from L-glutamate: step 2/4. Its function is as follows. Catalyzes the ATP-dependent phosphorylation of N-acetyl-L-glutamate. The sequence is that of Acetylglutamate kinase from Cereibacter sphaeroides (strain ATCC 17029 / ATH 2.4.9) (Rhodobacter sphaeroides).